A 77-amino-acid polypeptide reads, in one-letter code: uncharacterized protein (77 aa).

The protein to E.coli YdfK.

This is an uncharacterized protein from Escherichia coli (strain K12).